An 82-amino-acid chain; its full sequence is RNA-binding protein Hfq (82 aa).

The region spanning 11–71 (DTFLNSVRKS…ISTIMPAQPV (61 aa)) is the Sm domain.

This sequence belongs to the Hfq family. Homohexamer.

In terms of biological role, RNA chaperone that binds small regulatory RNA (sRNAs) and mRNAs to facilitate mRNA translational regulation in response to envelope stress, environmental stress and changes in metabolite concentrations. Also binds with high specificity to tRNAs. The sequence is that of RNA-binding protein Hfq from Caulobacter vibrioides (strain ATCC 19089 / CIP 103742 / CB 15) (Caulobacter crescentus).